A 769-amino-acid polypeptide reads, in one-letter code: Integrin beta-2 (769 aa).

Positions M1 to S22 are cleaved as a signal peptide. Pyrrolidone carboxylic acid is present on Q23. Residues Q23–N700 are Extracellular-facing. In terms of domain architecture, PSI spans E24–P74. Disulfide bonds link C25-C43, C33-C447, C36-C62, C46-C73, C191-C198, C246-C286, C386-C400, C420-C445, C449-C467, C459-C470, C472-C481, C483-C514, C497-C512, C506-C517, C519-C534, C536-C559, C541-C557, C549-C562, C564-C573, C575-C598, C582-C596, C590-C601, C603-C612, C615-C618, C622-C662, C628-C647, C631-C643, and C670-C695. 2 N-linked (GlcNAc...) asparagine glycosylation sites follow: N50 and N116. The region spanning G124–L363 is the VWFA domain. Mg(2+)-binding residues include S136 and S138. Residues S138, D141, D142, and D173 each contribute to the Ca(2+) site. Ca(2+) is bound by residues N229, D231, P233, and E234. E234 is a binding site for Mg(2+). N254 is a glycosylation site (N-linked (GlcNAc...) asparagine). The Ca(2+) site is built by D264 and E347. Positions R397–D399 match the Cell attachment site motif. I-EGF domains are found at residues C449 to E482, C483 to E535, C536 to Q574, and C575 to S613. An N-linked (GlcNAc...) asparagine glycan is attached at N501. N-linked (GlcNAc...) asparagine glycosylation occurs at N642. A helical membrane pass occupies residues I701–W723. The Cytoplasmic portion of the chain corresponds to K724 to S769. Residues S745 and S756 each carry the phosphoserine modification. A phosphothreonine mark is found at T758 and T760.

Belongs to the integrin beta chain family. Heterodimer of an alpha and a beta subunit. The ITGB2 beta subunit associates with the ITGAL, ITGAM, ITGAX or ITGAD alpha subunits. Found in a complex with CD177 and ITGAM/CD11b. Interacts with FGR. Interacts with COPS5 and RANBP9. Interacts with FLNA (via filamin repeats 4, 9, 12, 17, 19, 21, and 23). Interacts with THBD. Post-translationally, both Ser-745 and Ser-756 become phosphorylated when T-cells are exposed to phorbol esters. Phosphorylation on Thr-758 (but not on Ser-756) allows interaction with 14-3-3 proteins.

It localises to the cell membrane. The protein localises to the membrane raft. In terms of biological role, integrin ITGAL/ITGB2 is a receptor for ICAM1, ICAM2, ICAM3 and ICAM4. Integrin ITGAL/ITGB2 is also a receptor for the secreted form of ubiquitin-like protein ISG15; the interaction is mediated by ITGAL. Integrins ITGAM/ITGB2 and ITGAX/ITGB2 are receptors for the iC3b fragment of the third complement component and for fibrinogen. Integrin ITGAX/ITGB2 recognizes the sequence G-P-R in fibrinogen alpha-chain. Integrin ITGAM/ITGB2 recognizes P1 and P2 peptides of fibrinogen gamma chain. Integrin ITGAM/ITGB2 is also a receptor for factor X. Integrin ITGAD/ITGB2 is a receptor for ICAM3 and VCAM1. Contributes to natural killer cell cytotoxicity. Involved in leukocyte adhesion and transmigration of leukocytes including T-cells and neutrophils. Triggers neutrophil transmigration during lung injury through PTK2B/PYK2-mediated activation. Integrin ITGAL/ITGB2 in association with ICAM3, contributes to apoptotic neutrophil phagocytosis by macrophages. The polypeptide is Integrin beta-2 (ITGB2) (Bos taurus (Bovine)).